The primary structure comprises 771 residues: 5-methyltetrahydropteroyltriglutamate--homocysteine methyltransferase (771 aa).

Residues 16–19 (RELK) and K117 contribute to the 5-methyltetrahydropteroyltri-L-glutamate site. L-homocysteine contacts are provided by residues 443-445 (IGS) and E496. Residues 443–445 (IGS) and E496 each bind L-methionine. Residues 527-528 (RC) and W573 contribute to the 5-methyltetrahydropteroyltri-L-glutamate site. Residue D611 coordinates L-homocysteine. L-methionine is bound at residue D611. E617 is a 5-methyltetrahydropteroyltri-L-glutamate binding site. 3 residues coordinate Zn(2+): H653, C655, and E677. H706 functions as the Proton donor in the catalytic mechanism. Residue C738 participates in Zn(2+) binding.

It belongs to the vitamin-B12 independent methionine synthase family. The cofactor is Zn(2+).

It carries out the reaction 5-methyltetrahydropteroyltri-L-glutamate + L-homocysteine = tetrahydropteroyltri-L-glutamate + L-methionine. It functions in the pathway amino-acid biosynthesis; L-methionine biosynthesis via de novo pathway; L-methionine from L-homocysteine (MetE route): step 1/1. Its function is as follows. Catalyzes the transfer of a methyl group from 5-methyltetrahydrofolate to homocysteine resulting in methionine formation. The sequence is that of 5-methyltetrahydropteroyltriglutamate--homocysteine methyltransferase from Stutzerimonas stutzeri (strain A1501) (Pseudomonas stutzeri).